We begin with the raw amino-acid sequence, 271 residues long: Formamidopyrimidine-DNA glycosylase (271 aa).

The active-site Schiff-base intermediate with DNA is the P2. The active-site Proton donor is E3. Catalysis depends on K58, which acts as the Proton donor; for beta-elimination activity. 3 residues coordinate DNA: H91, R110, and R152. An FPG-type zinc finger spans residues 237–271 (RAYGRGGQPCTVCQTELKEIKLGQRTSVFCPSCQR). Catalysis depends on R261, which acts as the Proton donor; for delta-elimination activity.

Belongs to the FPG family. In terms of assembly, monomer. The cofactor is Zn(2+).

The catalysed reaction is Hydrolysis of DNA containing ring-opened 7-methylguanine residues, releasing 2,6-diamino-4-hydroxy-5-(N-methyl)formamidopyrimidine.. The enzyme catalyses 2'-deoxyribonucleotide-(2'-deoxyribose 5'-phosphate)-2'-deoxyribonucleotide-DNA = a 3'-end 2'-deoxyribonucleotide-(2,3-dehydro-2,3-deoxyribose 5'-phosphate)-DNA + a 5'-end 5'-phospho-2'-deoxyribonucleoside-DNA + H(+). Involved in base excision repair of DNA damaged by oxidation or by mutagenic agents. Acts as a DNA glycosylase that recognizes and removes damaged bases. Has a preference for oxidized purines, such as 7,8-dihydro-8-oxoguanine (8-oxoG). Has AP (apurinic/apyrimidinic) lyase activity and introduces nicks in the DNA strand. Cleaves the DNA backbone by beta-delta elimination to generate a single-strand break at the site of the removed base with both 3'- and 5'-phosphates. In Hahella chejuensis (strain KCTC 2396), this protein is Formamidopyrimidine-DNA glycosylase.